We begin with the raw amino-acid sequence, 1761 residues long: Probable serine/threonine-protein kinase DDB_G0282963 (1761 aa).

Disordered stretches follow at residues 18 to 47 (PQQQQIPQQQEQQQQQQQQQQQQQQQQQQQ), 60 to 269 (QQQQ…SNKL), 322 to 458 (SISN…SDFN), 545 to 717 (QNSS…KSSQ), 749 to 783 (LKNSPFPPSSPILSPQTDDPNNNNNNNNSNTTISQ), 798 to 830 (AFYNSGSNNNNNNNNNNNNNNNNNNNNTNSTSA), 842 to 956 (TTQI…KSVF), 972 to 997 (NSHHHHNSGNNSSNSNNNNNDDEVPT), 1081 to 1151 (ITSA…CNVN), 1179 to 1305 (KNNC…PSKQ), 1318 to 1343 (ALDSTNNNNNNNNDTDSTSSNMGTPT), and 1355 to 1459 (QHSR…ECWK). 4 stretches are compositionally biased toward low complexity: residues 19-47 (QQQQIPQQQEQQQQQQQQQQQQQQQQQQQ), 60-85 (QQQQEQQNNNNNINDNINGNNNSNEI), 92-105 (NITNNNGTSIIISL), and 112-237 (ALNS…NNNN). Residues 238 to 256 (KQMTPPTFKNNLQVKHQPQ) are compositionally biased toward polar residues. Low complexity-rich tracts occupy residues 257–269 (SSSGGSIGGSNKL), 322–341 (SISNTTNETTTTTTTTTNTT), 348–451 (GSIG…NNGV), and 546–572 (NSSLNINNNNNSSNNNNINNNNNNNNI). The segment covering 573–582 (MAGSTSSVIY) has biased composition (polar residues). Low complexity predominate over residues 591-627 (NENNNNNINNDNTVCNINNNNNSNNNKSNNSNNSNNS). Residues 633–643 (SSDEEPETDSD) show a composition bias toward acidic residues. Low complexity-rich tracts occupy residues 674–697 (NNTNTNTNTHNTYNNNKNNNNNNT), 759–778 (PILSPQTDDPNNNNNNNNSN), 805–824 (NNNNNNNNNNNNNNNNNNNN), 847–885 (TSDIDTSNSDNNNNNNNNNTSDNNFNDYNNDYNNDYNNY), 902–956 (TKMS…KSVF), 979–990 (SGNNSSNSNNNN), 1081–1149 (ITSA…CTCN), and 1180–1262 (NNCT…SNNN). A compositionally biased stretch (basic residues) spans 1263–1273 (NHHHHHHHHHN). Composition is skewed to low complexity over residues 1288–1303 (SSSSSPWSSPALSSPS), 1320–1338 (DSTNNNNNNNNDTDSTSSN), 1359–1386 (NNSSNNQNNNNINNNNNNNNNNNNNNNN), and 1393–1454 (SNST…MNSN). In terms of domain architecture, Protein kinase spans 1476–1744 (LFLIKKIGAG…AITSLYDDYI (269 aa)). Residues 1482-1490 (IGAGSFSKV) and Lys1503 contribute to the ATP site. Catalysis depends on Asp1597, which acts as the Proton acceptor.

This sequence belongs to the protein kinase superfamily. TKL Ser/Thr protein kinase family.

The enzyme catalyses L-seryl-[protein] + ATP = O-phospho-L-seryl-[protein] + ADP + H(+). It catalyses the reaction L-threonyl-[protein] + ATP = O-phospho-L-threonyl-[protein] + ADP + H(+). This is Probable serine/threonine-protein kinase DDB_G0282963 from Dictyostelium discoideum (Social amoeba).